The chain runs to 315 residues: 31 kDa ribonucleoprotein, chloroplastic (315 aa).

A chloroplast-targeting transit peptide spans 1 to 71 (MSCATKPIIK…LSPKKKTSVS (71 aa)). Residues 114–133 (AGESDEVEADEEEEEFQEPP) are disordered. Residues 115 to 133 (GESDEVEADEEEEEFQEPP) are compositionally biased toward acidic residues. 2 consecutive RRM domains span residues 136–214 (AKLF…KAAR) and 230–308 (YRIY…VAED).

It localises to the plastid. The protein localises to the chloroplast. Could be involved in splicing and/or processing of chloroplast RNA's. In Nicotiana sylvestris (Wood tobacco), this protein is 31 kDa ribonucleoprotein, chloroplastic.